The chain runs to 1297 residues: Protein Atossa (1297 aa).

Disordered regions lie at residues 1–22 (MIPTSVTNSPPPAGLGQNGASA) and 117–149 (TNPYGSMGGSENRAVNGSGSTGSPSSSSLTHQR). Low complexity predominate over residues 133 to 144 (GSGSTGSPSSSS). The transactivation domain 1 (TAD1) stretch occupies residues 174-182 (VSLAINDLN). Disordered regions lie at residues 206-227 (SSAGGGTNNSSAASSPGSNSSD), 287-311 (TPTTTATATASSGASSSASRPKHGP), 518-655 (GLPH…ETQS), 704-741 (SNGTANGSTNGATDDGDDSDTTASEMEETSSCSLSSAD), and 1017-1048 (AAHKRRSRHLSDRSDRSSLGSDEQLSDEDLES). 2 stretches are compositionally biased toward low complexity: residues 213-226 (NNSSAASSPGSNSS) and 287-305 (TPTTTATATASSGASSSAS). The segment covering 564-578 (SALTPTTTAGGSNCD) has biased composition (polar residues). Residues 605 to 620 (QKYRKRMQRRDKKRER) show a composition bias toward basic residues. Composition is skewed to low complexity over residues 643-655 (SQTQSQTTSETQS) and 706-716 (GTANGSTNGAT). A compositionally biased stretch (acidic residues) spans 717-731 (DDGDDSDTTASEMEE). The required for macropage invasion stretch occupies residues 1074 to 1132 (LLGNLEESLLQRRLMPKIEVMGFTLQLGASGGFCPTQVNIPAVSYFYELHGETLSTPYL). Residues 1150-1158 (VQATLLNPI) are transactivation domain 2 (TAD2). A disordered region spans residues 1192–1213 (SQDQDEGHKVPRSPTVTSTTSK). Low complexity predominate over residues 1203–1212 (RSPTVTSTTS).

It belongs to the ATOS family. As to expression, expressed in macrophages.

The protein resides in the nucleus. Its function is as follows. Transcription regulator that synchronizes transcriptional and translational programs to promote macrophage invasion of tissues. Required in macrophages for their early invasion into the extended germband. Induces transcriptional expression of metabolic enzymes as well as of the translational regulator pths/DDX47. With pths/DDX47, adjusts transcription and translation of a subset of OXPHOS genes to increase mitochondrial bioenergetics and allow macrophage tissue invasion. This Drosophila melanogaster (Fruit fly) protein is Protein Atossa.